The following is a 298-amino-acid chain: Acetylglutamate kinase (298 aa).

Residues glycine 69–glycine 70, arginine 91, and asparagine 196 contribute to the substrate site.

The protein belongs to the acetylglutamate kinase family. ArgB subfamily.

It localises to the cytoplasm. It carries out the reaction N-acetyl-L-glutamate + ATP = N-acetyl-L-glutamyl 5-phosphate + ADP. It participates in amino-acid biosynthesis; L-arginine biosynthesis; N(2)-acetyl-L-ornithine from L-glutamate: step 2/4. Its function is as follows. Catalyzes the ATP-dependent phosphorylation of N-acetyl-L-glutamate. This is Acetylglutamate kinase from Nitrobacter hamburgensis (strain DSM 10229 / NCIMB 13809 / X14).